A 481-amino-acid chain; its full sequence is Bifunctional protein HldE (481 aa).

The tract at residues Met-1–Thr-318 is ribokinase. Asn-195–Glu-198 contributes to the ATP binding site. The active site involves Asp-264. The interval Met-344–Val-481 is cytidylyltransferase.

The protein in the N-terminal section; belongs to the carbohydrate kinase PfkB family. This sequence in the C-terminal section; belongs to the cytidylyltransferase family. As to quaternary structure, homodimer.

The enzyme catalyses D-glycero-beta-D-manno-heptose 7-phosphate + ATP = D-glycero-beta-D-manno-heptose 1,7-bisphosphate + ADP + H(+). It catalyses the reaction D-glycero-beta-D-manno-heptose 1-phosphate + ATP + H(+) = ADP-D-glycero-beta-D-manno-heptose + diphosphate. It participates in nucleotide-sugar biosynthesis; ADP-L-glycero-beta-D-manno-heptose biosynthesis; ADP-L-glycero-beta-D-manno-heptose from D-glycero-beta-D-manno-heptose 7-phosphate: step 1/4. Its pathway is nucleotide-sugar biosynthesis; ADP-L-glycero-beta-D-manno-heptose biosynthesis; ADP-L-glycero-beta-D-manno-heptose from D-glycero-beta-D-manno-heptose 7-phosphate: step 3/4. In terms of biological role, catalyzes the phosphorylation of D-glycero-D-manno-heptose 7-phosphate at the C-1 position to selectively form D-glycero-beta-D-manno-heptose-1,7-bisphosphate. Catalyzes the ADP transfer from ATP to D-glycero-beta-D-manno-heptose 1-phosphate, yielding ADP-D-glycero-beta-D-manno-heptose. This Sodalis glossinidius (strain morsitans) protein is Bifunctional protein HldE.